The following is a 114-amino-acid chain: Small ribosomal subunit protein bS6 (114 aa).

Belongs to the bacterial ribosomal protein bS6 family.

Binds together with bS18 to 16S ribosomal RNA. This Thermosynechococcus vestitus (strain NIES-2133 / IAM M-273 / BP-1) protein is Small ribosomal subunit protein bS6.